A 193-amino-acid polypeptide reads, in one-letter code: NADH-quinone oxidoreductase subunit B (193 aa).

[4Fe-4S] cluster-binding residues include Cys-49, Cys-50, Cys-115, and Cys-144. Positions 172-193 are disordered; sequence FKKEEPREANAPVPVNTEMPLE.

It belongs to the complex I 20 kDa subunit family. As to quaternary structure, NDH-1 is composed of 14 different subunits. Subunits NuoB, C, D, E, F, and G constitute the peripheral sector of the complex. [4Fe-4S] cluster serves as cofactor.

It localises to the cell inner membrane. The enzyme catalyses a quinone + NADH + 5 H(+)(in) = a quinol + NAD(+) + 4 H(+)(out). NDH-1 shuttles electrons from NADH, via FMN and iron-sulfur (Fe-S) centers, to quinones in the respiratory chain. The immediate electron acceptor for the enzyme in this species is believed to be ubiquinone. Couples the redox reaction to proton translocation (for every two electrons transferred, four hydrogen ions are translocated across the cytoplasmic membrane), and thus conserves the redox energy in a proton gradient. The chain is NADH-quinone oxidoreductase subunit B from Akkermansia muciniphila (strain ATCC BAA-835 / DSM 22959 / JCM 33894 / BCRC 81048 / CCUG 64013 / CIP 107961 / Muc).